Consider the following 105-residue polypeptide: Large ribosomal subunit protein uL24 (105 aa).

The protein belongs to the universal ribosomal protein uL24 family. Part of the 50S ribosomal subunit.

Its function is as follows. One of two assembly initiator proteins, it binds directly to the 5'-end of the 23S rRNA, where it nucleates assembly of the 50S subunit. One of the proteins that surrounds the polypeptide exit tunnel on the outside of the subunit. The chain is Large ribosomal subunit protein uL24 from Aeromonas hydrophila subsp. hydrophila (strain ATCC 7966 / DSM 30187 / BCRC 13018 / CCUG 14551 / JCM 1027 / KCTC 2358 / NCIMB 9240 / NCTC 8049).